We begin with the raw amino-acid sequence, 495 residues long: Glucokinase (495 aa).

A Hexokinase domain is found at 3 to 483 (SALLDEAARI…SGVGAALIAL (481 aa)). The hexokinase small subdomain stretch occupies residues 57-206 (NGTEKGLYLA…GLPVRVAALV (150 aa)). ATP is bound at residue K93. The interval 149-175 (DLGFTFSFPVRQLGINKGTLIRWTKGF) is glucose-binding. A hexokinase large subdomain region spans residues 207-472 (NDTVGTLMAR…KKIRIGISKD (266 aa)). Position 472–477 (472–477 (DGSGVG)) interacts with ATP.

The protein belongs to the hexokinase family. Monomer.

The catalysed reaction is D-glucose + ATP = D-glucose 6-phosphate + ADP + H(+). The enzyme catalyses a D-hexose + ATP = a D-hexose 6-phosphate + ADP + H(+). It catalyses the reaction D-mannose + ATP = D-mannose 6-phosphate + ADP + H(+). It carries out the reaction D-glucosamine + ATP = D-glucosamine 6-phosphate + ADP + H(+). The protein operates within carbohydrate metabolism; hexose metabolism. Its pathway is carbohydrate degradation; glycolysis; D-glyceraldehyde 3-phosphate and glycerone phosphate from D-glucose: step 1/4. Its function is as follows. The enzyme has great affinity for glucose. Mannose, 2-deoxyglucose and glucosamine can serve as substrates. In Aspergillus niger, this protein is Glucokinase (glkA).